The primary structure comprises 509 residues: Pyruvate kinase (509 aa).

Phosphoserine is present on S29. Substrate is bound at residue R56. K(+)-binding residues include N58 and S60. Residue N58–H61 participates in ATP binding. S63 is modified (phosphoserine). K(+) is bound by residues D91 and T92. ATP-binding residues include R98 and K184. E249 is a Mg(2+) binding site. Substrate contacts are provided by G272 and D273. D273 serves as a coordination point for Mg(2+). The residue at position 281 (S281) is a Phosphoserine. Position 305 (T305) interacts with substrate. Residue S412 is modified to Phosphoserine.

Belongs to the pyruvate kinase family. Homotetramer. The cofactor is Mg(2+). K(+) is required as a cofactor.

The catalysed reaction is pyruvate + ATP = phosphoenolpyruvate + ADP + H(+). It functions in the pathway carbohydrate degradation; glycolysis; pyruvate from D-glyceraldehyde 3-phosphate: step 5/5. This chain is Pyruvate kinase (pyk1), found in Schizosaccharomyces pombe (strain 972 / ATCC 24843) (Fission yeast).